The chain runs to 1065 residues: Outer capsid protein VP3 (1065 aa).

It is found in the virion. It catalyses the reaction a 5'-end diphospho-ribonucleoside in mRNA + GTP + H(+) = a 5'-end (5'-triphosphoguanosine)-ribonucleoside in mRNA + diphosphate. The enzyme catalyses a 5'-end (5'-triphosphoguanosine)-ribonucleoside in mRNA + S-adenosyl-L-methionine = a 5'-end (N(7)-methyl 5'-triphosphoguanosine)-ribonucleoside in mRNA + S-adenosyl-L-homocysteine. Outer capsid protein involved in mRNA capping. Catalyzes the last 3 enzymatic activities for formation of the 5' cap structure on the viral plus-strand transcripts, namely the RNA guanylyltransferase, RNA-7N- and RNA-2'O-methyltransferase activities. The chain is Outer capsid protein VP3 (S3) from Cryphonectria parasitica mycoreovirus 1 (strain 9B21) (CpMYRV-1).